The following is a 134-amino-acid chain: MILACDVGLKRIGIAALLNGVVLPLEAILRHNRNQASRDLSDLLREKNIQVLVVGKPNESYADTNVRIEHFIKLVDFTGEIVFINEDNSSIEAYDNLEHLGRKNKRLATKDGRLDSLSACRILERYCQQVLKNH.

This sequence belongs to the YqgF nuclease family.

Its subcellular location is the cytoplasm. Its function is as follows. Could be a nuclease involved in processing of the 5'-end of pre-16S rRNA. In Helicobacter pylori (strain P12), this protein is Putative pre-16S rRNA nuclease.